We begin with the raw amino-acid sequence, 763 residues long: ATP-dependent RNA helicase SUPV3L1, mitochondrial (763 aa).

The transit peptide at M1 to P65 directs the protein to the mitochondrion. The segment at R39 to L58 is disordered. The 141-residue stretch at E192 to F332 folds into the Helicase ATP-binding domain. ATP is bound at residue G205 to T212. Residues H354–A519 enclose the Helicase C-terminal domain. 2 disordered regions span residues D679–L721 and E742–K763. Polar residues predominate over residues S680–E697.

It belongs to the helicase family. Mg(2+) serves as cofactor. Mn(2+) is required as a cofactor.

It is found in the nucleus. Its subcellular location is the mitochondrion matrix. The protein resides in the mitochondrion nucleoid. The catalysed reaction is ATP + H2O = ADP + phosphate + H(+). Major helicase player in mitochondrial RNA metabolism. Component of the mitochondrial degradosome (mtEXO) complex, that degrades 3' overhang double-stranded RNA with a 3'-to-5' directionality in an ATP-dependent manner. ATPase and ATP-dependent multisubstrate helicase, able to unwind double-stranded (ds) DNA and RNA, and RNA/DNA heteroduplexes in the 5'-to-3' direction. Plays a role in the RNA surveillance system in mitochondria; regulates the stability of mature mRNAs, the removal of aberrantly formed mRNAs and the rapid degradation of non coding processing intermediates. Also implicated in recombination and chromatin maintenance pathways. May protect cells from apoptosis. Associates with mitochondrial DNA. The protein is ATP-dependent RNA helicase SUPV3L1, mitochondrial (supv3l1) of Danio rerio (Zebrafish).